The primary structure comprises 88 residues: Small ribosomal subunit protein eS21 (88 aa).

It belongs to the eukaryotic ribosomal protein eS21 family. Component of the small ribosomal subunit. Mature ribosomes consist of a small (40S) and a large (60S) subunit. The 40S subunit contains about 33 different proteins and 1 molecule of RNA (18S). The 60S subunit contains about 49 different proteins and 3 molecules of RNA (25S, 5.8S and 5S).

Its subcellular location is the cytoplasm. In terms of biological role, required for the processing of the 20S rRNA-precursor to mature 18S rRNA in a late step of the maturation of 40S ribosomal subunits. Has a physiological role leading to 18S rRNA stability. This Aspergillus fumigatus (strain ATCC MYA-4609 / CBS 101355 / FGSC A1100 / Af293) (Neosartorya fumigata) protein is Small ribosomal subunit protein eS21 (rps21).